A 379-amino-acid chain; its full sequence is Chaperone protein DnaJ (379 aa).

One can recognise a J domain in the interval 5–70; sequence DYYETLEVSQ…QKRAAYDQYG (66 aa). The CR-type zinc finger occupies 135–213; it reads GKSLEIKVPT…CRGQGRVEKT (79 aa). Positions 148, 151, 165, 168, 187, 190, 201, and 204 each coordinate Zn(2+). 4 CXXCXGXG motif repeats span residues 148-155, 165-172, 187-194, and 201-208; these read CEPCDGSG, CSTCHGHG, CPTCSGKG, and CTSCRGQG.

Belongs to the DnaJ family. Homodimer. Zn(2+) is required as a cofactor.

Its subcellular location is the cytoplasm. Functionally, participates actively in the response to hyperosmotic and heat shock by preventing the aggregation of stress-denatured proteins and by disaggregating proteins, also in an autonomous, DnaK-independent fashion. Unfolded proteins bind initially to DnaJ; upon interaction with the DnaJ-bound protein, DnaK hydrolyzes its bound ATP, resulting in the formation of a stable complex. GrpE releases ADP from DnaK; ATP binding to DnaK triggers the release of the substrate protein, thus completing the reaction cycle. Several rounds of ATP-dependent interactions between DnaJ, DnaK and GrpE are required for fully efficient folding. Also involved, together with DnaK and GrpE, in the DNA replication of plasmids through activation of initiation proteins. The chain is Chaperone protein DnaJ from Colwellia maris.